The primary structure comprises 318 residues: 2-keto-3-deoxygluconate permease (318 aa).

Transmembrane regions (helical) follow at residues 10 to 30 (LPGGMMLVPLLLGALCHTLWP), 42 to 62 (GLISGTVPILAVWFFCMGATI), 82 to 102 (IAVAWLVAVLCAPLLPIGGVS), 109 to 129 (LSVLALVAAMDMTNGGLYAAL), 139 to 159 (AGAVVLMSLESGPLISMLILG), 163 to 183 (LASFEPQLFVGAVLPLLLGFA), 201 to 221 (TLVPFFGFALGNTLDLSTIAH), 224 to 244 (TSGVLLGVAVVVITGLPLLLA), 257 to 277 (VAASSTAGAAVATPALIAGMA), and 289 to 309 (ALVASAVIVTSLLVPLLTALY).

Belongs to the KdgT transporter family.

The protein resides in the cell inner membrane. The catalysed reaction is 2-dehydro-3-deoxy-D-gluconate(in) + H(+)(in) = 2-dehydro-3-deoxy-D-gluconate(out) + H(+)(out). Catalyzes the proton-dependent uptake of 2-keto-3-deoxygluconate (KDG) into the cell. In Xanthomonas axonopodis pv. citri (strain 306), this protein is 2-keto-3-deoxygluconate permease.